We begin with the raw amino-acid sequence, 264 residues long: Thiazole synthase (264 aa).

K106 serves as the catalytic Schiff-base intermediate with DXP. 1-deoxy-D-xylulose 5-phosphate is bound by residues G167, 193-194 (AG), and 215-216 (NS).

This sequence belongs to the ThiG family. In terms of assembly, homotetramer. Forms heterodimers with either ThiH or ThiS.

The protein resides in the cytoplasm. The enzyme catalyses [ThiS sulfur-carrier protein]-C-terminal-Gly-aminoethanethioate + 2-iminoacetate + 1-deoxy-D-xylulose 5-phosphate = [ThiS sulfur-carrier protein]-C-terminal Gly-Gly + 2-[(2R,5Z)-2-carboxy-4-methylthiazol-5(2H)-ylidene]ethyl phosphate + 2 H2O + H(+). It participates in cofactor biosynthesis; thiamine diphosphate biosynthesis. Functionally, catalyzes the rearrangement of 1-deoxy-D-xylulose 5-phosphate (DXP) to produce the thiazole phosphate moiety of thiamine. Sulfur is provided by the thiocarboxylate moiety of the carrier protein ThiS. In vitro, sulfur can be provided by H(2)S. The polypeptide is Thiazole synthase (Azotobacter vinelandii (strain DJ / ATCC BAA-1303)).